Reading from the N-terminus, the 331-residue chain is Ketol-acid reductoisomerase (NADP(+)) (331 aa).

One can recognise a KARI N-terminal Rossmann domain in the interval 2-182 (ARMYYDEDGN…GGTRAGILET (181 aa)). NADP(+) contacts are provided by residues 25–28 (YGSQ), serine 51, serine 53, and 83–86 (DEVQ). Histidine 108 is a catalytic residue. NADP(+) is bound at residue glycine 134. Residues 183–328 (SFREETETDL…KDLRAMFSWL (146 aa)) form the KARI C-terminal knotted domain. Aspartate 191, glutamate 195, glutamate 227, and glutamate 231 together coordinate Mg(2+). Substrate is bound at residue serine 252.

It belongs to the ketol-acid reductoisomerase family. It depends on Mg(2+) as a cofactor.

The catalysed reaction is (2R)-2,3-dihydroxy-3-methylbutanoate + NADP(+) = (2S)-2-acetolactate + NADPH + H(+). The enzyme catalyses (2R,3R)-2,3-dihydroxy-3-methylpentanoate + NADP(+) = (S)-2-ethyl-2-hydroxy-3-oxobutanoate + NADPH + H(+). It functions in the pathway amino-acid biosynthesis; L-isoleucine biosynthesis; L-isoleucine from 2-oxobutanoate: step 2/4. It participates in amino-acid biosynthesis; L-valine biosynthesis; L-valine from pyruvate: step 2/4. In terms of biological role, involved in the biosynthesis of branched-chain amino acids (BCAA). Catalyzes an alkyl-migration followed by a ketol-acid reduction of (S)-2-acetolactate (S2AL) to yield (R)-2,3-dihydroxy-isovalerate. In the isomerase reaction, S2AL is rearranged via a Mg-dependent methyl migration to produce 3-hydroxy-3-methyl-2-ketobutyrate (HMKB). In the reductase reaction, this 2-ketoacid undergoes a metal-dependent reduction by NADPH to yield (R)-2,3-dihydroxy-isovalerate. The polypeptide is Ketol-acid reductoisomerase (NADP(+)) (Gloeothece citriformis (strain PCC 7424) (Cyanothece sp. (strain PCC 7424))).